Reading from the N-terminus, the 876-residue chain is Alanine--tRNA ligase (876 aa).

K74 is subject to N6-acetyllysine. Zn(2+) contacts are provided by H564, H568, C666, and H670.

This sequence belongs to the class-II aminoacyl-tRNA synthetase family. As to quaternary structure, homotetramer. Zn(2+) is required as a cofactor.

It localises to the cytoplasm. It carries out the reaction tRNA(Ala) + L-alanine + ATP = L-alanyl-tRNA(Ala) + AMP + diphosphate. Its function is as follows. Catalyzes the attachment of alanine to tRNA(Ala) in a two-step reaction: alanine is first activated by ATP to form Ala-AMP and then transferred to the acceptor end of tRNA(Ala). Also edits incorrectly charged Ser-tRNA(Ala) and Gly-tRNA(Ala) via its editing domain. The chain is Alanine--tRNA ligase from Escherichia coli (strain ATCC 8739 / DSM 1576 / NBRC 3972 / NCIMB 8545 / WDCM 00012 / Crooks).